We begin with the raw amino-acid sequence, 417 residues long: RH-like protein IIF (417 aa).

11 helical membrane passes run 12-32 (CLPLCALTLEAALILLFYFFT), 44-64 (LVASYQVGQDLTVMAAIGFGF), 77-97 (VAFNLFMLALGVQWAILLDGF), 125-145 (ISAGAVLGYVNLVQLVVMVLV), 172-192 (FYLFTAYFGVTVAWCLPKPLP), 203-223 (TIPSLSAMLGALFLWMFWPSF), 238-258 (VFNTYYALAVSVVTAISGSSL), 265-285 (ISMTYVHSAVLAGGVAVGTSC), 287-307 (LIPSPWLAMVLGLVAGLISIG), 331-351 (NFSLLGLLGEIIYIVLVVRHT), and 358-378 (MIGFQVLLSMGELSLAIAIAL).

It belongs to the ammonium transporter (TC 2.A.49) family. Rh subfamily.

The protein resides in the membrane. May be part of an oligomeric complex which is likely to have a transport or channel function in the erythrocyte membrane. The chain is RH-like protein IIF from Pan troglodytes (Chimpanzee).